A 161-amino-acid polypeptide reads, in one-letter code: Hydrogenase expression/formation protein HoxO (161 aa).

The protein belongs to the HupG/HyaE family.

In Cupriavidus necator (strain ATCC 17699 / DSM 428 / KCTC 22496 / NCIMB 10442 / H16 / Stanier 337) (Ralstonia eutropha), this protein is Hydrogenase expression/formation protein HoxO (hoxO).